Here is a 263-residue protein sequence, read N- to C-terminus: MGLMNAFDSQTEDSSPAIGRNLRSRPLARKKLSEMVEEELEQMIRRREFGEGEQLPSERELMAFFNVGRPSVREALAALKRKGLVQINNGERARVSRPSADTIIGELSGMAKDFLSHPGGIAHFEQLRLFFESSLVRYAAEHATDEQIDLLAKALEINSQSLDNNAAFIRSDVDFHRVLAEIPGNPIFMAIHVALLDWLIAARPTVTDQALHEHNNVSYQQHIAIVDAIRRHDPDEADRALQSHLNSVSATWHAFGQTTNKKK.

The disordered stretch occupies residues 1–22 (MGLMNAFDSQTEDSSPAIGRNL). Residues 30-98 (KKLSEMVEEE…NGERARVSRP (69 aa)) enclose the HTH gntR-type domain. The segment at residues 58 to 77 (ERELMAFFNVGRPSVREALA) is a DNA-binding region (H-T-H motif).

The protein belongs to the NanR family.

Its function is as follows. Transcriptional repressor that controls expression of the genes required for the catabolism of sialic acids. The polypeptide is HTH-type transcriptional repressor NanR (Shigella boydii serotype 4 (strain Sb227)).